Here is a 66-residue protein sequence, read N- to C-terminus: Beta-mammal toxin Co3 (66 aa).

The LCN-type CS-alpha/beta domain maps to 1–66 (KEGYIVNYYD…VWPLPNKTCN (66 aa)). Intrachain disulfides connect Cys-12/Cys-65, Cys-16/Cys-41, Cys-25/Cys-46, and Cys-29/Cys-48.

As to expression, expressed by the venom gland.

The protein resides in the secreted. Its function is as follows. Beta toxins bind voltage-independently at site-4 of sodium channels (Nav) and shift the voltage of activation toward more negative potentials thereby affecting sodium channel activation and promoting spontaneous and repetitive firing. This toxin acts on human Nav1.2/SCN2A, Nav1.4/SCN4A and Nav1.6/SCN8A voltage-gated sodium channels. Also, it reduces the peak of sodium currents in Nav1.5/SCN5A at all potentials. In vivo, is lethal to mice when intraperitoneally injected at a dose of 5ug. No activity is observed when injected into crickets or woodlice. The protein is Beta-mammal toxin Co3 of Centruroides ornatus (Scorpion).